We begin with the raw amino-acid sequence, 88 residues long: Long neurotoxin LNTX-1 (88 aa).

A signal peptide spans 1–21 (MKTLLLTLVVVTIVCLDFGYA). Cystine bridges form between C24–C42, C35–C63, C48–C52, C67–C78, and C79–C84.

This sequence belongs to the three-finger toxin family. Long-chain subfamily. Type II alpha-neurotoxin sub-subfamily. As to expression, expressed by the venom gland.

The protein localises to the secreted. In terms of biological role, binds with high affinity to muscular (alpha-1/CHRNA1) and neuronal (alpha-7/CHRNA7) nicotinic acetylcholine receptor (nAChR) and inhibits acetylcholine from binding to the receptor, thereby impairing neuromuscular and neuronal transmission. The protein is Long neurotoxin LNTX-1 of Demansia vestigiata (Lesser black whip snake).